The primary structure comprises 327 residues: D-threonate 4-phosphate dehydrogenase (327 aa).

H139 and T140 together coordinate substrate. A divalent metal cation is bound by residues H169, H213, and H268. Residues K276, N285, and R294 each contribute to the substrate site.

Belongs to the PdxA family. PdxA2 subfamily. Homodimer. The cofactor is a divalent metal cation.

It catalyses the reaction 4-O-phospho-D-threonate + NAD(+) = dihydroxyacetone phosphate + CO2 + NADH. Its function is as follows. Catalyzes the NAD-dependent oxidation and subsequent decarboxylation of D-threonate 4-phosphate to produce dihydroxyacetone phosphate (DHAP). Can also use 4-hydroxy-L-threonine 4-phosphate as substrate. The protein is D-threonate 4-phosphate dehydrogenase of Salmonella typhimurium (strain LT2 / SGSC1412 / ATCC 700720).